A 276-amino-acid chain; its full sequence is S-adenosylmethionine decarboxylase proenzyme (276 aa).

Serine 124 functions as the Schiff-base intermediate with substrate; via pyruvic acid in the catalytic mechanism. Serine 124 is subject to Pyruvic acid (Ser); by autocatalysis. Histidine 129 (proton acceptor; for processing activity) is an active-site residue. The active-site Proton donor; for catalytic activity is the cysteine 152.

It belongs to the prokaryotic AdoMetDC family. Type 2 subfamily. Heterooctamer of four alpha and four beta chains arranged as a tetramer of alpha/beta heterodimers. Pyruvate is required as a cofactor. Is synthesized initially as an inactive proenzyme. Formation of the active enzyme involves a self-maturation process in which the active site pyruvoyl group is generated from an internal serine residue via an autocatalytic post-translational modification. Two non-identical subunits are generated from the proenzyme in this reaction, and the pyruvate is formed at the N-terminus of the alpha chain, which is derived from the carboxyl end of the proenzyme. The post-translation cleavage follows an unusual pathway, termed non-hydrolytic serinolysis, in which the side chain hydroxyl group of the serine supplies its oxygen atom to form the C-terminus of the beta chain, while the remainder of the serine residue undergoes an oxidative deamination to produce ammonia and the pyruvoyl group blocking the N-terminus of the alpha chain.

The enzyme catalyses S-adenosyl-L-methionine + H(+) = S-adenosyl 3-(methylsulfanyl)propylamine + CO2. It participates in amine and polyamine biosynthesis; S-adenosylmethioninamine biosynthesis; S-adenosylmethioninamine from S-adenosyl-L-methionine: step 1/1. Functionally, catalyzes the decarboxylation of S-adenosylmethionine to S-adenosylmethioninamine (dcAdoMet), the propylamine donor required for the synthesis of the polyamines spermine and spermidine from the diamine putrescine. This Desulfitobacterium hafniense (strain DSM 10664 / DCB-2) protein is S-adenosylmethionine decarboxylase proenzyme.